The primary structure comprises 277 residues: NH(3)-dependent NAD(+) synthetase (277 aa).

G46 to S53 lines the ATP pocket. D52 lines the Mg(2+) pocket. R141 lines the deamido-NAD(+) pocket. T161 lines the ATP pocket. E166 serves as a coordination point for Mg(2+). Deamido-NAD(+) contacts are provided by K174 and D181. The ATP site is built by K190 and T212. Residue H262–K263 participates in deamido-NAD(+) binding.

Belongs to the NAD synthetase family. In terms of assembly, homodimer.

The enzyme catalyses deamido-NAD(+) + NH4(+) + ATP = AMP + diphosphate + NAD(+) + H(+). It functions in the pathway cofactor biosynthesis; NAD(+) biosynthesis; NAD(+) from deamido-NAD(+) (ammonia route): step 1/1. In terms of biological role, catalyzes the ATP-dependent amidation of deamido-NAD to form NAD. Uses ammonia as a nitrogen source. The protein is NH(3)-dependent NAD(+) synthetase of Corynebacterium efficiens (strain DSM 44549 / YS-314 / AJ 12310 / JCM 11189 / NBRC 100395).